The chain runs to 904 residues: Protein abrupt (904 aa).

The segment covering M1 to A15 has biased composition (polar residues). 2 disordered regions span residues M1 to V30 and G53 to Q72. The 66-residue stretch at V103–H168 folds into the BTB domain. Residues S204 to N238 show a composition bias toward low complexity. Disordered regions lie at residues S204 to P287, A349 to Q390, L411 to E438, and A451 to S501. Over residues K239–C253 the composition is skewed to polar residues. Positions N254 to S286 are enriched in low complexity. Residues S429–E438 show a composition bias toward basic and acidic residues. Over residues L452–N461 the composition is skewed to polar residues. At S474 the chain carries Phosphoserine. A compositionally biased stretch (basic and acidic residues) spans P481–R500. C2H2-type zinc fingers lie at residues R544–H567 and Y573–H596. 2 disordered regions span residues E633–S696 and A832–T904. A compositionally biased stretch (gly residues) spans G642–S655. Positions D671–D682 are enriched in acidic residues. S837, S846, and S868 each carry phosphoserine. Basic and acidic residues predominate over residues M851 to S868. Residues D876–V886 show a composition bias toward polar residues. Phosphoserine is present on residues S889 and S896.

In terms of tissue distribution, expressed in CNS midline cells during embryonic stages 9-13. Expression also seen in cells of the stomagastric nervous system. Segmentally repeated stripes of ectodermal expression appear at stage 11 that become uniform by stage 12 and throughout embryogenesis. Expressed at variable levels in somatic muscles from stage 16 and in all imaginal disks during larval development. Expression is seen in da neurons that grow in two-dimensional dendrites underneath the epidermis during late embryonic, larval, and pupal stages.

Its subcellular location is the nucleus. Expression is vital for development; may be involved in transcriptional regulation. In embryos, muscle specific expression is required for segmental nerve b (SNb) motoneuron target recognition within ventral longitudinal muscles. Has a role in establishing and maintaining embryonic muscle attachments, adult sensory cell formation (macrochaetae) and morphogenesis of adult appendages (legs, antenna aristae and male external genitalia). Has a role in the morphogenesis of the class I dendritic neurons: selective expression of ab in class I da neurons plays a pivotal role in forming dendritic arbors, which are characteristic of the class I cells. The development of more complex arbors of class II-IV neurons depends on the absence of ab. The polypeptide is Protein abrupt (ab) (Drosophila melanogaster (Fruit fly)).